Reading from the N-terminus, the 373-residue chain is L-threonine 3-dehydrogenase, mitochondrial (373 aa).

NAD(+) contacts are provided by residues 62–67 (GGLGQL), 88–90 (DIR), 106–107 (DI), tyrosine 195, lysine 199, and isoleucine 225. The active-site Proton donor/acceptor is tyrosine 195.

This sequence belongs to the NAD(P)-dependent epimerase/dehydratase family. In terms of assembly, homodimer.

It localises to the mitochondrion. It carries out the reaction L-threonine + NAD(+) = (2S)-2-amino-3-oxobutanoate + NADH + H(+). It participates in amino-acid degradation; L-threonine degradation via oxydo-reductase pathway; glycine from L-threonine: step 1/2. In terms of biological role, catalyzes the NAD(+)-dependent oxidation of L-threonine to 2-amino-3-ketobutyrate, mediating L-threonine catabolism. The polypeptide is L-threonine 3-dehydrogenase, mitochondrial (Bos taurus (Bovine)).